The following is a 312-amino-acid chain: D-apiose import binding protein (312 aa).

The N-terminal stretch at 1 to 26 (MKASKRWVALAAATLTLFTATGTAQA) is a signal peptide. Residues Asn39, 115 to 116 (DR), 162 to 164 (DIN), Arg168, Asn218, Asp243, and Gln263 contribute to the D-apiofuranose site.

It belongs to the bacterial solute-binding protein 2 family.

The protein resides in the periplasm. In terms of biological role, part of an ABC transporter complex involved in D-apiose import. Binds D-apiose, D-ribose and D-ribulose. This is D-apiose import binding protein from Paraburkholderia graminis (strain ATCC 700544 / DSM 17151 / LMG 18924 / NCIMB 13744 / C4D1M).